Reading from the N-terminus, the 426-residue chain is FK506-binding protein 3 (426 aa).

2 disordered regions span residues 37-143 (SLDP…PKHQ) and 171-314 (TGNY…KKKK). Composition is skewed to acidic residues over residues 65-94 (DYFE…EAEE), 111-131 (EDEE…DDVS), and 181-225 (QDEE…SEEE). Composition is skewed to basic and acidic residues over residues 226 to 257 (GTPK…ESTS), 264 to 278 (KKDE…KELE), and 287 to 311 (VEKD…DGDK). The 87-residue stretch at 340–426 (GAKVGIRYIG…TFDIKLVSLK (87 aa)) folds into the PPIase FKBP-type domain.

This sequence belongs to the FKBP-type PPIase family. FKBP3/4 subfamily.

The protein localises to the nucleus. It is found in the nucleolus. The enzyme catalyses [protein]-peptidylproline (omega=180) = [protein]-peptidylproline (omega=0). Its activity is regulated as follows. Inhibited by both FK506 and rapamycin. PPIases accelerate the folding of proteins. It catalyzes the cis-trans isomerization of proline imidic peptide bonds in oligopeptides. The polypeptide is FK506-binding protein 3 (FPR3) (Candida albicans (strain SC5314 / ATCC MYA-2876) (Yeast)).